The primary structure comprises 553 residues: Cytokine-like nuclear factor N-PAC (553 aa).

In terms of domain architecture, PWWP spans 8–66; sequence LGDLVWGKLGRYPPWPGKIVNPPKDLKKPRGKKCFFVKFFGTEDHAWIKVEQLKPYHAH. 2 stretches are compositionally biased toward basic and acidic residues: residues 92–145 and 162–182; these read RAKG…EGKK and RAQEQSPRKRGRPPKDEKDLT. The disordered stretch occupies residues 92–188; it reads RAKGKDQTSS…KDLTIPESST (97 aa). Position 130 is a phosphoserine (Ser130). Residue Lys135 forms a Glycyl lysine isopeptide (Lys-Gly) (interchain with G-Cter in SUMO2) linkage. Position 167 is a phosphoserine (Ser167). Positions 168 to 180 form a DNA-binding region, a.T hook; that stretch reads PRKRGRPPKDEKD. Residues Lys176, Lys179, Lys201, and Lys211 each participate in a glycyl lysine isopeptide (Lys-Gly) (interchain with G-Cter in SUMO2) cross-link. Residues 214–217 are interaction with histone H3; the sequence is DPHF. An interaction with KDM1B region spans residues 216–225; that stretch reads HFHHFLLSQT. Residues Lys227, Lys237, Lys240, and Lys269 each participate in a glycyl lysine isopeptide (Lys-Gly) (interchain with G-Cter in SUMO2) cross-link. A dehydrogenase domain region spans residues 261–553; that stretch reads GSITPTDKKI…MSAVYRAYIH (293 aa). 271–285 provides a ligand contact to NAD(+); the sequence is GFLGLGLMGSGIVSN. Residue Lys302 forms a Glycyl lysine isopeptide (Lys-Gly) (interchain with G-Cter in SUMO2) linkage. The NAD(+) site is built by Thr362 and Lys505. Ser540 is modified (phosphoserine).

Belongs to the HIBADH-related family. NP60 subfamily. As to quaternary structure, homotetramere. Interacts with MAPK14. Interacts with KDM1B at nucleosomes; this interaction stimulates H3K4me1 and H3K4me2 demethylation. Binds to mononucleosomes. Interacts with GATA4; the interaction is required for a synergistic activation of GATA4 target genes transcription.

It is found in the nucleus. The protein resides in the chromosome. Functionally, cytokine-like nuclear factor with chromatin gene reader activity involved in chromatin modification and regulation of gene expression. Acts as a nucleosome-destabilizing factor that is recruited to genes during transcriptional activation. Recognizes and binds histone H3 without a preference for specific epigenetic markers and also binds DNA. Interacts with KDM1B and promotes its histone demethylase activity by facilitating the capture of H3 tails, they form a multifunctional enzyme complex that modifies transcribed chromatin and facilitates Pol II transcription through nucleosomes. Stimulates the acetylation of 'Lys-56' of nucleosomal histone H3 (H3K56ac) by EP300. With GATA4, co-binds a defined set of heart development genes and coregulates their expression during cardiomyocyte differentiation. Regulates p38 MAP kinase activity by mediating stress activation of MAPK14/p38alpha and specifically regulating MAPK14 signaling. Indirectly promotes phosphorylation of MAPK14 and activation of ATF2. The phosphorylation of MAPK14 requires upstream activity of MAP2K4 and MAP2K6. This chain is Cytokine-like nuclear factor N-PAC, found in Homo sapiens (Human).